An 812-amino-acid chain; its full sequence is MVSSPPRPTALTDDIHAFGPARATIQGQPLSDSEVEAMDAFFRACNYLAVGMIYLLDNPLLKEPLKPEHIKKRLLGHWGSSPGLAFCYLHLNRIIKKYQQEVIFLAGPGHGAPGVLAPVYLEGSYSEIYPNISEDAAGLKKFFKQFSFPGGIGSHCTPETPGSIHEGGELGYVLSHACGAAFDNPDLIVAAVVGDGEAETAPLATSWHINKFLNPARDGAVLPILNLNGYKINNPTILARIPHQDLENYFRGLGYDPCFVEGSDRPSMHQAMAATLDYCVTRIKEIQRTAREEGLTTLPRWPMIVLRTPKGWTGPAEVNGHKVEGSWRAHQVPLADVHTNPENLQLLENWLRSYRPEELFDHNGTFRPDLKALAPTGNYRMGMNPHANGGLLRKDLKMPNFREYGITFDKPGQIEVENTRPLGVFLRDVMRNNPRNFRIFGPDETTSNKLNAVYEASKKFWIAESFDEDADGGELSPEGRVIEMLSEHTLEGMLEGYLLTGRHGFFSTYEAFVHVIDSMFNQHAKWLSICNELSWRADVSSLNLLITSTVWRQDHNGFTHQDPGFLDIVCNKSAKVTRIYLPPDVNSLLSVADHCLRSKNYVNVIVSDKQLHLQYLTMDQAIIHCTKGVGIWDWASNDQGYEPDLVMASAGDIPTQEALAAIALLRQEFPELKIRYINVVDLFKLQPETEHPHGLSDRDFDSLFTLDRPIIFNFHGYPWLIHRLAYRRHNHRNLHVRGYKEKGNINTPLELAINNEIDRFSLAIDAIDRLPELQVAGAHAKEKFRNMQIAARNYAYEYGVDKPEFSHWTWPF.

The protein belongs to the XFP family. It depends on thiamine diphosphate as a cofactor.

In Thermosynechococcus vestitus (strain NIES-2133 / IAM M-273 / BP-1), this protein is Probable phosphoketolase.